Reading from the N-terminus, the 247-residue chain is MAGHSKWSQIKRSKAVVDAKRGAVFTRLAREISVAARSGGDPNGNFQLRTAINKAKAARMPAANIERAIAKGSGQDQNGACQLEAIRYEGYGPGGVAVLIEALTDNRNRTAADLRLTFNKHGGKLGESGCVAYLFEQRSEVYLSAQSAQDGGKVSEDALLENLLELEADGYQLIDDGAVVYGPFQALEGLQAGLRDQGWIVEGWEHCWRPLTTISQADQKSEDQCLQLLEALDELDDVHHISSNLES.

Belongs to the TACO1 family.

The protein localises to the cytoplasm. This chain is Probable transcriptional regulatory protein PMT_1423, found in Prochlorococcus marinus (strain MIT 9313).